The following is a 106-amino-acid chain: NADH dehydrogenase [ubiquinone] 1 beta subcomplex subunit 10-B (106 aa).

Residues 1–25 (MGRKKGLPEFEESAPDGFDPENPYK) are disordered.

Belongs to the complex I NDUFB10 subunit family. Complex I is composed of at least 49 different subunits.

Its subcellular location is the mitochondrion inner membrane. Its function is as follows. Accessory subunit of the mitochondrial membrane respiratory chain NADH dehydrogenase (Complex I), that is believed not to be involved in catalysis. Complex I functions in the transfer of electrons from NADH to the respiratory chain. The immediate electron acceptor for the enzyme is believed to be ubiquinone. This is NADH dehydrogenase [ubiquinone] 1 beta subcomplex subunit 10-B from Arabidopsis thaliana (Mouse-ear cress).